The following is a 554-amino-acid chain: Kinesin-like protein 3 (554 aa).

A Kinesin motor domain is found at 3 to 325; it reads SIKVVCRIRP…LRFGHRAKSI (323 aa). Residues 84 to 91 and 233 to 240 each bind ATP; these read GQTGSGKT and GSESVGKS. Residues 446 to 473 are a coiled coil; sequence LSSTKQQLSDLMTALGDAQERYVELVKN.

It belongs to the TRAFAC class myosin-kinesin ATPase superfamily. Kinesin family.

It is found in the cytoplasm. The protein localises to the cytoskeleton. In terms of biological role, cytoplasmic motor that could play a role in Golgi membrane recycling. This chain is Kinesin-like protein 3 (klp3), found in Schizosaccharomyces pombe (strain 972 / ATCC 24843) (Fission yeast).